Consider the following 40-residue polypeptide: Large ribosomal subunit protein bL36B (40 aa).

This sequence belongs to the bacterial ribosomal protein bL36 family.

This is Large ribosomal subunit protein bL36B from Clavibacter michiganensis subsp. michiganensis (strain NCPPB 382).